The chain runs to 182 residues: Crossover junction endodeoxyribonuclease RuvC (182 aa).

Active-site residues include Asp-7, Glu-69, and Asp-141. The Mg(2+) site is built by Asp-7, Glu-69, and Asp-141.

It belongs to the RuvC family. As to quaternary structure, homodimer which binds Holliday junction (HJ) DNA. The HJ becomes 2-fold symmetrical on binding to RuvC with unstacked arms; it has a different conformation from HJ DNA in complex with RuvA. In the full resolvosome a probable DNA-RuvA(4)-RuvB(12)-RuvC(2) complex forms which resolves the HJ. Requires Mg(2+) as cofactor.

It localises to the cytoplasm. It catalyses the reaction Endonucleolytic cleavage at a junction such as a reciprocal single-stranded crossover between two homologous DNA duplexes (Holliday junction).. The RuvA-RuvB-RuvC complex processes Holliday junction (HJ) DNA during genetic recombination and DNA repair. Endonuclease that resolves HJ intermediates. Cleaves cruciform DNA by making single-stranded nicks across the HJ at symmetrical positions within the homologous arms, yielding a 5'-phosphate and a 3'-hydroxyl group; requires a central core of homology in the junction. The consensus cleavage sequence is 5'-(A/T)TT(C/G)-3'. Cleavage occurs on the 3'-side of the TT dinucleotide at the point of strand exchange. HJ branch migration catalyzed by RuvA-RuvB allows RuvC to scan DNA until it finds its consensus sequence, where it cleaves and resolves the cruciform DNA. The polypeptide is Crossover junction endodeoxyribonuclease RuvC (Paracidovorax citrulli (strain AAC00-1) (Acidovorax citrulli)).